We begin with the raw amino-acid sequence, 441 residues long: MAHFLETQEPLVFSGKKRNDRDDEDGDALVAKKSALAVCDADPAAAIANIRHEFGEHGGVNMSIEASATFTVMEPDTMRRMFTGELGPDNDFYVYSRHFNPTVLNLSRQMAALEGTQAAYCTSSGMSAISSVMLQLCSSGGHVVAASTLYGGTHALLSHFLPRTCNITTSFVDITDHGAVANAIVEGRTQVLYFESVANPTLTVADIPELSRMAHEKGVTVVVDNTFAPMVLSPAKLGADVVVHSISKFISGGADIIAGAVCGSENLVKEMMDLRGGSLMLLGPTMNAKVAFELSERIPHLGLRMREHSHRAQVYAERMRDLGMKVIYPGLETHPQHKLFKGMVNRDYGYGGLLSIDMETEEKANKLMAYLQNATQFGFMAVSLGYYETLMSCSGSSTSSELDPSQKEAAGISPGLVRMSVGYVGTLEQKWTQFEKAFLRM.

Residues M1–D25 are disordered. K248 is subject to N6-(pyridoxal phosphate)lysine.

Belongs to the trans-sulfuration enzymes family. In terms of assembly, homotetramer. It depends on pyridoxal 5'-phosphate as a cofactor. In terms of tissue distribution, expressed in roots, stems, siliques, leaves, flowers and seeds after imbibition (at protein level). Transcripts accumulate in dry mature seeds, but at protein level, only present upon imbibition.

The protein localises to the cytoplasm. It carries out the reaction L-methionine + H2O = methanethiol + 2-oxobutanoate + NH4(+). Its function is as follows. Catalyzes the degradation of L-methionine to alpha-ketobutyrate, methanethiol and ammonia. Exhibits a high activity toward L-methionine, L-ethionine, L-homocysteine and seleno-L-methionine, but not L-cysteine. Involved in an alternative cysteine biosynthesis pathway to the reverse trans-sulfuration pathway (methionine-&gt;homocysteine-&gt;cystathionine-&gt;cysteine) in which methanethiol is an intermediate. Also mediates an alternative isoleucine biosynthesis pathway in which 2-ketobutyrate is an intermediate. The protein is Methionine gamma-lyase (MGL) of Arabidopsis thaliana (Mouse-ear cress).